A 324-amino-acid polypeptide reads, in one-letter code: D-alanine--D-alanine ligase (324 aa).

In terms of domain architecture, ATP-grasp spans N121 to E321. I149 to T204 provides a ligand contact to ATP. Mg(2+) contacts are provided by D275, E288, and N290.

This sequence belongs to the D-alanine--D-alanine ligase family. Mg(2+) serves as cofactor. Requires Mn(2+) as cofactor.

It is found in the cytoplasm. The catalysed reaction is 2 D-alanine + ATP = D-alanyl-D-alanine + ADP + phosphate + H(+). It participates in cell wall biogenesis; peptidoglycan biosynthesis. In terms of biological role, cell wall formation. This chain is D-alanine--D-alanine ligase, found in Phocaeicola vulgatus (strain ATCC 8482 / DSM 1447 / JCM 5826 / CCUG 4940 / NBRC 14291 / NCTC 11154) (Bacteroides vulgatus).